Consider the following 84-residue polypeptide: Large ribosomal subunit protein bL27 (84 aa).

A compositionally biased stretch (polar residues) spans M1–K11. A disordered region spans residues M1–R20.

The protein belongs to the bacterial ribosomal protein bL27 family.

The chain is Large ribosomal subunit protein bL27 from Mycoplasmopsis synoviae (strain 53) (Mycoplasma synoviae).